The primary structure comprises 76 residues: uncharacterized protein (76 aa).

To K.pneumoniae LtrA, E.coli YjiE, and YhcS.

This is an uncharacterized protein from Escherichia coli O6:H1 (strain CFT073 / ATCC 700928 / UPEC).